We begin with the raw amino-acid sequence, 238 residues long: ATP synthase subunit a (238 aa).

The next 5 helical transmembrane spans lie at 17–37 (LSDM…AVAA), 75–95 (FLTL…LGLP), 112–132 (DATV…YYGV), 179–199 (ILLG…AVGA), and 202–222 (FPIM…AFIF).

The protein belongs to the ATPase A chain family. F-type ATPases have 2 components, CF(1) - the catalytic core - and CF(0) - the membrane proton channel. CF(1) has five subunits: alpha(3), beta(3), gamma(1), delta(1), epsilon(1). CF(0) has three main subunits: a(1), b(2) and c(9-12). The alpha and beta chains form an alternating ring which encloses part of the gamma chain. CF(1) is attached to CF(0) by a central stalk formed by the gamma and epsilon chains, while a peripheral stalk is formed by the delta and b chains.

It is found in the cell membrane. Functionally, key component of the proton channel; it plays a direct role in the translocation of protons across the membrane. The chain is ATP synthase subunit a from Bacillus sp. (strain PS3).